The sequence spans 589 residues: Heterogeneous nuclear ribonucleoprotein L (589 aa).

The span at 1–16 (MSRRLLPRAEKRRRRL) shows a compositional bias: basic residues. The interval 1-100 (MSRRLLPRAE…NYDDPHKTPA (100 aa)) is disordered. The segment covering 17–27 (EQRQQPDEQRR) has biased composition (basic and acidic residues). The segment covering 38–54 (AGGGGGGGRYYGGGSEG) has biased composition (gly residues). The residue at position 52 (S52) is a Phosphoserine. Residues K59 and K62 each participate in a glycyl lysine isopeptide (Lys-Gly) (interchain with G-Cter in SUMO2) cross-link. Over residues 69-90 (QHGGGGGGGGGAGAAGGGGGGE) the composition is skewed to gly residues. S101 is subject to Phosphoserine. The RRM 1 domain occupies 102-176 (PVVHIRGLID…HPAFVNYSTS (75 aa)). Residue K136 forms a Glycyl lysine isopeptide (Lys-Gly) (interchain with G-Cter in SUMO2) linkage. S185 carries the post-translational modification Phosphoserine. In terms of domain architecture, RRM 2 spans 193–270 (SVLLFTILNP…CTLKIEYAKP (78 aa)). K269 is modified (N6-acetyllysine). Positions 284 to 301 (DYTNPNLSGQGDPGSNPN) are enriched in polar residues. A disordered region spans residues 284–378 (DYTNPNLSGQ…PPPPPEYGPH (95 aa)). Phosphoserine occurs at positions 291 and 298. K302 is covalently cross-linked (Glycyl lysine isopeptide (Lys-Gly) (interchain with G-Cter in SUMO2)). 2 positions are modified to asymmetric dimethylarginine: R354 and R358. Residues 364–375 (GHPPPPPPPPEY) are compositionally biased toward pro residues. A Phosphoserine modification is found at S381. 2 consecutive RRM domains span residues 382–478 (PVLM…KDFS) and 495–583 (RIQH…LCFS). S544 carries the phosphoserine; by CaMK4 modification. A Glycyl lysine isopeptide (Lys-Gly) (interchain with G-Cter in SUMO2) cross-link involves residue K568.

Identified in a IGF2BP1-dependent mRNP granule complex containing untranslated mRNAs. Interacts with HNRNPLL. Interacts with APEX1; the interaction is DNA-dependent. Component of a complex with SETD2. Interacts with ELAVL1. Part of a transcription inhibitory ribonucleoprotein complex composed at least of the circular RNA circZNF827, ZNF827 and HNRNPK. Interacts with CHD8 in an RNA-dependent manner. Several isoelectric forms of the L protein are probably the results of post-translational modifications. Post-translationally, phosphorylation at Ser-544 by CaMK4 enhances interaction with a CaMK4-responsive RNA element (CaRRE1), and prevents inclusion of the stress axis-regulated exon (STREX) of the KCNMA1 potassium channel transcripts upon membrane depolarization.

It is found in the nucleus. It localises to the nucleoplasm. The protein resides in the cytoplasm. Its function is as follows. Splicing factor binding to exonic or intronic sites and acting as either an activator or repressor of exon inclusion. Exhibits a binding preference for CA-rich elements. Component of the heterogeneous nuclear ribonucleoprotein (hnRNP) complexes and associated with most nascent transcripts. Associates, together with APEX1, to the negative calcium responsive element (nCaRE) B2 of the APEX2 promoter. As part of a ribonucleoprotein complex composed at least of ZNF827, HNRNPK and the circular RNA circZNF827 that nucleates the complex on chromatin, may negatively regulate the transcription of genes involved in neuronal differentiation. Regulates alternative splicing of a core group of genes involved in neuronal differentiation, likely by mediating H3K36me3-coupled transcription elongation and co-transcriptional RNA processing via interaction with CHD8. The chain is Heterogeneous nuclear ribonucleoprotein L (HNRNPL) from Homo sapiens (Human).